The following is a 96-amino-acid chain: DNA-binding protein Saci_1468 (96 aa).

The protein belongs to the PDCD5 family.

The chain is DNA-binding protein Saci_1468 from Sulfolobus acidocaldarius (strain ATCC 33909 / DSM 639 / JCM 8929 / NBRC 15157 / NCIMB 11770).